Consider the following 450-residue polypeptide: Exodeoxyribonuclease 7 large subunit (450 aa).

This sequence belongs to the XseA family. As to quaternary structure, heterooligomer composed of large and small subunits.

It is found in the cytoplasm. It catalyses the reaction Exonucleolytic cleavage in either 5'- to 3'- or 3'- to 5'-direction to yield nucleoside 5'-phosphates.. In terms of biological role, bidirectionally degrades single-stranded DNA into large acid-insoluble oligonucleotides, which are then degraded further into small acid-soluble oligonucleotides. The protein is Exodeoxyribonuclease 7 large subunit of Listeria innocua serovar 6a (strain ATCC BAA-680 / CLIP 11262).